A 319-amino-acid polypeptide reads, in one-letter code: Thiamine pyrophosphokinase (319 aa).

Ser-2 carries the N-acetylserine modification.

Belongs to the thiamine pyrophosphokinase family. As to quaternary structure, homodimer.

It catalyses the reaction thiamine + ATP = thiamine diphosphate + AMP + H(+). It functions in the pathway cofactor biosynthesis; thiamine diphosphate biosynthesis; thiamine diphosphate from thiamine: step 1/1. Functionally, essential protein, it is the only enzyme in yeast capable of synthesizing thiamine pyrophosphate (TPP). This Saccharomyces cerevisiae (strain ATCC 204508 / S288c) (Baker's yeast) protein is Thiamine pyrophosphokinase.